A 234-amino-acid polypeptide reads, in one-letter code: MLTCKQYELLLFIHNHMKETGVPPSFDEMKTALELTSKSGIHRLITALEERGFIRRLPNRARAVEVIRLPEKITFNLSSARKISPSVIENNKRKISKNSDNFDLEEKKNIIIPIMGRIAAAVPISAIQQQINTLCLPQDMISLGEHYALEVKDDSMIEAGILDKDIIIVRRQNTATSGEIIIALIDKEEVTFKRYRRKGNSITLEAANPHYETRIYRPERVQIQGKLIGLIRKY.

A DNA-binding region (H-T-H motif) is located at residues 26 to 46 (FDEMKTALELTSKSGIHRLIT). Residues S155 and K193 each act as for autocatalytic cleavage activity in the active site.

It belongs to the peptidase S24 family. As to quaternary structure, homodimer.

The enzyme catalyses Hydrolysis of Ala-|-Gly bond in repressor LexA.. In terms of biological role, represses a number of genes involved in the response to DNA damage (SOS response), including recA and lexA. In the presence of single-stranded DNA, RecA interacts with LexA causing an autocatalytic cleavage which disrupts the DNA-binding part of LexA, leading to derepression of the SOS regulon and eventually DNA repair. In Bartonella henselae (strain ATCC 49882 / DSM 28221 / CCUG 30454 / Houston 1) (Rochalimaea henselae), this protein is LexA repressor.